Here is a 123-residue protein sequence, read N- to C-terminus: Small ribosomal subunit protein uS12 (123 aa).

Positions 1 to 21 (MPTIEQLVRKGRQAKPKKSKT) are disordered. Residues 9–20 (RKGRQAKPKKSK) are compositionally biased toward basic residues. Asp-89 carries the post-translational modification 3-methylthioaspartic acid.

It belongs to the universal ribosomal protein uS12 family. In terms of assembly, part of the 30S ribosomal subunit. Contacts proteins S8 and S17. May interact with IF1 in the 30S initiation complex.

Functionally, with S4 and S5 plays an important role in translational accuracy. Interacts with and stabilizes bases of the 16S rRNA that are involved in tRNA selection in the A site and with the mRNA backbone. Located at the interface of the 30S and 50S subunits, it traverses the body of the 30S subunit contacting proteins on the other side and probably holding the rRNA structure together. The combined cluster of proteins S8, S12 and S17 appears to hold together the shoulder and platform of the 30S subunit. This is Small ribosomal subunit protein uS12 from Bifidobacterium longum subsp. infantis (strain ATCC 15697 / DSM 20088 / JCM 1222 / NCTC 11817 / S12).